The primary structure comprises 355 residues: Protein-glutamate methylesterase/protein-glutamine glutaminase (355 aa).

Residues 3 to 121 form the Response regulatory domain; it reads NVLVVEDSPV…HPDHEATARK (119 aa). 4-aspartylphosphate is present on aspartate 54. Residues 154 to 348 form the CheB-type methylesterase domain; the sequence is PLLNRVAPAR…AALTNLVAER (195 aa). Catalysis depends on residues serine 170, histidine 197, and aspartate 290.

This sequence belongs to the CheB family. Post-translationally, phosphorylated by CheA. Phosphorylation of the N-terminal regulatory domain activates the methylesterase activity.

It localises to the cytoplasm. The catalysed reaction is [protein]-L-glutamate 5-O-methyl ester + H2O = L-glutamyl-[protein] + methanol + H(+). It catalyses the reaction L-glutaminyl-[protein] + H2O = L-glutamyl-[protein] + NH4(+). Functionally, involved in chemotaxis. Part of a chemotaxis signal transduction system that modulates chemotaxis in response to various stimuli. Catalyzes the demethylation of specific methylglutamate residues introduced into the chemoreceptors (methyl-accepting chemotaxis proteins or MCP) by CheR. Also mediates the irreversible deamidation of specific glutamine residues to glutamic acid. This chain is Protein-glutamate methylesterase/protein-glutamine glutaminase, found in Nitrosospira multiformis (strain ATCC 25196 / NCIMB 11849 / C 71).